Reading from the N-terminus, the 212-residue chain is Uracil phosphoribosyltransferase (212 aa).

5-phospho-alpha-D-ribose 1-diphosphate-binding positions include arginine 78, arginine 103, and 130–138; that span reads DPMLATGGS. Residues isoleucine 193 and 198 to 200 each bind uracil; that span reads GDA. Aspartate 199 is a binding site for 5-phospho-alpha-D-ribose 1-diphosphate.

Belongs to the UPRTase family. The cofactor is Mg(2+).

It carries out the reaction UMP + diphosphate = 5-phospho-alpha-D-ribose 1-diphosphate + uracil. It participates in pyrimidine metabolism; UMP biosynthesis via salvage pathway; UMP from uracil: step 1/1. With respect to regulation, allosterically activated by GTP. Catalyzes the conversion of uracil and 5-phospho-alpha-D-ribose 1-diphosphate (PRPP) to UMP and diphosphate. The polypeptide is Uracil phosphoribosyltransferase (Pseudomonas aeruginosa (strain LESB58)).